Here is a 793-residue protein sequence, read N- to C-terminus: Ferredoxin/F(420)H(2)-dependent CoB-CoM heterodisulfide reductase subunit A (793 aa).

Residue 147–170 (GGGVAGIEAALNLAEAGFPVTMVE) coordinates FAD. 4Fe-4S ferredoxin-type domains follow at residues 233–264 (RKPRFVLEDKCKGCVDLCSGVCPVEIENPMNY), 282–311 (QVVLIDPDHCVGCGLCQLACPAEAVDYEQK), 571–600 (MGAHVDPDKCIGCRTCVEVCKFGKISIENK), and 601–629 (KAVVDEVSCYGCGDCSAACPVGAIQMRNF). The [4Fe-4S] cluster site is built by C243, C246, C250, C254, C291, C294, C297, C301, C580, C583, C586, C590, C609, C612, C615, and C619.

It belongs to the HdrA family. As to quaternary structure, the ferredoxin/F(420)H(2)-dependent CoB-CoM heterodisulfide reductase is composed of three subunits; HdrA2, HdrB2 and HdrC2. Requires [4Fe-4S] cluster as cofactor. [2Fe-2S] cluster serves as cofactor. The cofactor is FAD.

The protein resides in the cytoplasm. The catalysed reaction is coenzyme B + coenzyme M + 2 oxidized [2Fe-2S]-[ferredoxin] = coenzyme M-coenzyme B heterodisulfide + 2 reduced [2Fe-2S]-[ferredoxin] + 2 H(+). It catalyses the reaction coenzyme B + 2 oxidized coenzyme F420-(gamma-L-Glu)(n) + coenzyme M + 2 reduced [2Fe-2S]-[ferredoxin] + 4 H(+) = coenzyme M-coenzyme B heterodisulfide + 2 reduced coenzyme F420-(gamma-L-Glu)(n) + 2 oxidized [2Fe-2S]-[ferredoxin]. Its pathway is cofactor metabolism; coenzyme M-coenzyme B heterodisulfide reduction; coenzyme B and coenzyme M from coenzyme M-coenzyme B heterodisulfide: step 1/1. Functionally, part of a complex that catalyzes the reversible reduction of CoM-S-S-CoB to the thiol-coenzymes H-S-CoM (coenzyme M) and H-S-CoB (coenzyme B). Catalyzes the transfer of electrons from ferredoxin to CoM-S-S-CoB during methanogenesis from acetate. Electrons transfer from ferredoxin to CoM-S-S-CoB via HdrA2, HdrC2 and HdrB2. In addition, the complex can use electron bifurcation to direct electron pairs from reduced coenzyme F420 towards the reduction of both ferredoxin and CoB-CoM heterodisulfide. This activity may take place during Fe(III)-dependent anaerobic methane oxidation. This is Ferredoxin/F(420)H(2)-dependent CoB-CoM heterodisulfide reductase subunit A from Methanosarcina acetivorans (strain ATCC 35395 / DSM 2834 / JCM 12185 / C2A).